The primary structure comprises 63 residues: Cytochrome c oxidase subunit 7C, mitochondrial (63 aa).

A mitochondrion-targeting transit peptide spans 1-16; it reads MLGQSIRRFTTSVVRR. The Mitochondrial matrix portion of the chain corresponds to 17-33; sequence SHYEEGPGKNLPFSVEN. N6-acetyllysine; alternate is present on Lys-25. Lys-25 carries the N6-succinyllysine; alternate modification. Residues 34-60 traverse the membrane as a helical segment; it reads KWRLLAMMTLYFGSGFAAPFFIVRHQL. Over 61–63 the chain is Mitochondrial intermembrane; it reads LKK.

The protein belongs to the cytochrome c oxidase VIIc family. Component of the cytochrome c oxidase (complex IV, CIV), a multisubunit enzyme composed of 14 subunits. The complex is composed of a catalytic core of 3 subunits MT-CO1, MT-CO2 and MT-CO3, encoded in the mitochondrial DNA, and 11 supernumerary subunits COX4I, COX5A, COX5B, COX6A, COX6B, COX6C, COX7A, COX7B, COX7C, COX8 and NDUFA4, which are encoded in the nuclear genome. The complex exists as a monomer or a dimer and forms supercomplexes (SCs) in the inner mitochondrial membrane with NADH-ubiquinone oxidoreductase (complex I, CI) and ubiquinol-cytochrome c oxidoreductase (cytochrome b-c1 complex, complex III, CIII), resulting in different assemblies (supercomplex SCI(1)III(2)IV(1) and megacomplex MCI(2)III(2)IV(2)). Interacts with RAB5IF.

The protein resides in the mitochondrion inner membrane. Its pathway is energy metabolism; oxidative phosphorylation. In terms of biological role, component of the cytochrome c oxidase, the last enzyme in the mitochondrial electron transport chain which drives oxidative phosphorylation. The respiratory chain contains 3 multisubunit complexes succinate dehydrogenase (complex II, CII), ubiquinol-cytochrome c oxidoreductase (cytochrome b-c1 complex, complex III, CIII) and cytochrome c oxidase (complex IV, CIV), that cooperate to transfer electrons derived from NADH and succinate to molecular oxygen, creating an electrochemical gradient over the inner membrane that drives transmembrane transport and the ATP synthase. Cytochrome c oxidase is the component of the respiratory chain that catalyzes the reduction of oxygen to water. Electrons originating from reduced cytochrome c in the intermembrane space (IMS) are transferred via the dinuclear copper A center (CU(A)) of subunit 2 and heme A of subunit 1 to the active site in subunit 1, a binuclear center (BNC) formed by heme A3 and copper B (CU(B)). The BNC reduces molecular oxygen to 2 water molecules using 4 electrons from cytochrome c in the IMS and 4 protons from the mitochondrial matrix. The polypeptide is Cytochrome c oxidase subunit 7C, mitochondrial (COX7C) (Sus scrofa (Pig)).